We begin with the raw amino-acid sequence, 297 residues long: 4-hydroxy-tetrahydrodipicolinate synthase (297 aa).

Residue Thr49 coordinates pyruvate. The active-site Proton donor/acceptor is the Tyr137. The active-site Schiff-base intermediate with substrate is the Lys166. Residue Ile208 coordinates pyruvate.

This sequence belongs to the DapA family. Homotetramer; dimer of dimers.

It is found in the cytoplasm. The enzyme catalyses L-aspartate 4-semialdehyde + pyruvate = (2S,4S)-4-hydroxy-2,3,4,5-tetrahydrodipicolinate + H2O + H(+). It participates in amino-acid biosynthesis; L-lysine biosynthesis via DAP pathway; (S)-tetrahydrodipicolinate from L-aspartate: step 3/4. Functionally, catalyzes the condensation of (S)-aspartate-beta-semialdehyde [(S)-ASA] and pyruvate to 4-hydroxy-tetrahydrodipicolinate (HTPA). In Phocaeicola vulgatus (strain ATCC 8482 / DSM 1447 / JCM 5826 / CCUG 4940 / NBRC 14291 / NCTC 11154) (Bacteroides vulgatus), this protein is 4-hydroxy-tetrahydrodipicolinate synthase.